The primary structure comprises 207 residues: ATP-dependent Clp protease proteolytic subunit (207 aa).

The active-site Nucleophile is serine 111. Histidine 136 is a catalytic residue.

This sequence belongs to the peptidase S14 family. As to quaternary structure, fourteen ClpP subunits assemble into 2 heptameric rings which stack back to back to give a disk-like structure with a central cavity, resembling the structure of eukaryotic proteasomes.

Its subcellular location is the cytoplasm. The catalysed reaction is Hydrolysis of proteins to small peptides in the presence of ATP and magnesium. alpha-casein is the usual test substrate. In the absence of ATP, only oligopeptides shorter than five residues are hydrolyzed (such as succinyl-Leu-Tyr-|-NHMec, and Leu-Tyr-Leu-|-Tyr-Trp, in which cleavage of the -Tyr-|-Leu- and -Tyr-|-Trp bonds also occurs).. Its function is as follows. Cleaves peptides in various proteins in a process that requires ATP hydrolysis. Has a chymotrypsin-like activity. Plays a major role in the degradation of misfolded proteins. This Photorhabdus laumondii subsp. laumondii (strain DSM 15139 / CIP 105565 / TT01) (Photorhabdus luminescens subsp. laumondii) protein is ATP-dependent Clp protease proteolytic subunit.